We begin with the raw amino-acid sequence, 377 residues long: MSLSLSDIKFPESWELIPNERNYIDYVYKESVELGVWRPDNKRDLIAHNNVVSLSKFFWPNMDFERLVMGGELMVWFFTFDDALDAGIYNDEQQAQVVKRMSDVFMNGTVEDDASGPEKMALHLRNKCEVMCGERKDTFNRFISSCIQWVDSIIPFNKIKIDGASPDIELYSYLRKINIGAFPCVTLTEVMLDHEIDHYVWYDPRWIKMNEDIAIITTLINDLVSYEKEVNDNAGDLNPLFFIQKQRKVPLTESFKEVVGLINHWVKDFTNLEESFMKSHKFKNSKQKRDFECMLEHLHYLASGSKLWSMQTPRYCSPTSPFIEMRKQSSSPNLTNSISIPTNNTNNSNNITSSPNKKQKIDITSSSAIFTTREIIN.

A DDxx(x)D/E motif motif is present at residues 81–86; the sequence is DDALDA. The NDxxSxxxD/E motif signature appears at 221 to 229; it reads NDLVSYEKE. The disordered stretch occupies residues 326-359; the sequence is RKQSSSPNLTNSISIPTNNTNNSNNITSSPNKKQ. A compositionally biased stretch (low complexity) spans 335–356; it reads TNSISIPTNNTNNSNNITSSPN.

This sequence belongs to the terpene synthase family.

It catalyses the reaction (2E,6E)-farnesyl diphosphate = (2S,3R,6S,9S)-(-)-protoillud-7-ene + diphosphate. Its function is as follows. Terpene synthase that converts its substrate farnesyl diphosphate (FPP) into the sesquiterpene protoillud-7-ene. In Dictyostelium purpureum (Slime mold), this protein is Terpene synthase 1.